Consider the following 346-residue polypeptide: Probable disease resistance protein At5g45440 (346 aa).

Positions 38–116 constitute an NB-ARC domain; that stretch reads KQVEDRVETD…AYAPRIWVSM (79 aa). Position 85-92 (85-92) interacts with ATP; sequence GEYGVGKT. Residues 315–346 are disordered; it reads FDDGKANQNGSKDGKTDSVDNPNSEESKTKPL.

In terms of biological role, possible disease resistance protein. In Arabidopsis thaliana (Mouse-ear cress), this protein is Probable disease resistance protein At5g45440.